We begin with the raw amino-acid sequence, 177 residues long: uncharacterized protein (177 aa).

Helical transmembrane passes span 20–42 (NLVS…LLAL), 62–84 (VVLW…VSLS), 94–116 (AMSS…GYFI), and 136–158 (GLLY…IIVA).

Its subcellular location is the cell membrane. This is an uncharacterized protein from Methanocaldococcus jannaschii (strain ATCC 43067 / DSM 2661 / JAL-1 / JCM 10045 / NBRC 100440) (Methanococcus jannaschii).